A 71-amino-acid chain; its full sequence is Large ribosomal subunit protein bL31 (71 aa).

Zn(2+) contacts are provided by Cys16, Cys18, Cys38, and Cys41.

This sequence belongs to the bacterial ribosomal protein bL31 family. Type A subfamily. Part of the 50S ribosomal subunit. Requires Zn(2+) as cofactor.

In terms of biological role, binds the 23S rRNA. This chain is Large ribosomal subunit protein bL31, found in Neisseria meningitidis serogroup A / serotype 4A (strain DSM 15465 / Z2491).